The following is a 140-amino-acid chain: Large ribosomal subunit protein uL16 (140 aa).

Positions 1–16 (MLMPKRVKHRKQMKGR) are enriched in basic residues. The disordered stretch occupies residues 1–20 (MLMPKRVKHRKQMKGRMKGD).

Belongs to the universal ribosomal protein uL16 family. As to quaternary structure, part of the 50S ribosomal subunit.

Functionally, binds 23S rRNA and is also seen to make contacts with the A and possibly P site tRNAs. The sequence is that of Large ribosomal subunit protein uL16 from Geobacter sulfurreducens (strain ATCC 51573 / DSM 12127 / PCA).